A 474-amino-acid chain; its full sequence is MSQDFDYDLVIIGAGVGGHGAALHAVKCGLKTAIIEAKDMGGTCVNRGCIPSKALLAASGRVREMSDQDHLQQLGIQINGVTFTREAIAAHANDLVSKIQSDLTNSLTRLKVDTIRGWGKVSGPQEVTVIGDNETRILKAKEIMLCPGSVPFVPPGIEIDHKTVFTSDEAVKLETLPQWIAIIGSGYIGLEFSDVYTALGCEVTMIEALPDLMPGFDPEIAKIAERVLIKSRDIETYTGVFATKIKAGSPVEIELTDAKTKEVIDTLEVDACLVATGRIPATKNLGLETVGVETDRRGFIEVNDQMQVIKDGKPVPHLWAVGDATGKMMLAHAASGQGVVAVENICGRKTEVDYRAIPAAAFTHPEISYVGLTEAQAKELGEKEGFVVSTAKTYFKGNSKALAEKETDGIAKVVYRQDTGELLGAHIIGIHASDLIQEAAQAIADRKSVRELAFHVHAHPTLSEVLDEAYKRAV.

FAD contacts are provided by residues 36-44 (EAKDMGGTC), lysine 53, and glycine 119. A disulfide bridge links cysteine 44 with cysteine 49. NAD(+) contacts are provided by residues 184–188 (GSGYI), glutamate 207, and 275–278 (ATGR). Residues aspartate 323 and alanine 331 each coordinate FAD. Histidine 459 acts as the Proton acceptor in catalysis.

The protein belongs to the class-I pyridine nucleotide-disulfide oxidoreductase family. As to quaternary structure, homodimer. It depends on FAD as a cofactor.

It localises to the cell inner membrane. It carries out the reaction N(6)-[(R)-dihydrolipoyl]-L-lysyl-[protein] + NAD(+) = N(6)-[(R)-lipoyl]-L-lysyl-[protein] + NADH + H(+). Lipoamide dehydrogenase is a component of the alpha-ketoacid dehydrogenase complexes. The chain is Dihydrolipoyl dehydrogenase (lpdA) from Synechocystis sp. (strain ATCC 27184 / PCC 6803 / Kazusa).